The sequence spans 132 residues: MVILYTAPSCTSCRKAKAWLQTHDIDFQEHNLFTEPLSIEKIKQILQLTESGTEEIISTRSKAFQQLNVDINDLSLNELFDMITHDPSLLRRPIMLDEKRLQVGYNEDEIRRFLPRKIRTLELLRAQQLANM.

An intrachain disulfide couples C10 to C13.

It belongs to the ArsC family. Spx subfamily. In terms of assembly, interacts with the C-terminal domain of the alpha subunit of the RNAP.

The protein localises to the cytoplasm. In terms of biological role, global transcriptional regulator that plays a key role in stress response and exerts either positive or negative regulation of genes. Acts by interacting with the C-terminal domain of the alpha subunit of the RNA polymerase (RNAP). This interaction can enhance binding of RNAP to the promoter region of target genes and stimulate their transcription, or block interaction of RNAP with activator. This is Global transcriptional regulator Spx from Lactiplantibacillus plantarum (strain ATCC BAA-793 / NCIMB 8826 / WCFS1) (Lactobacillus plantarum).